We begin with the raw amino-acid sequence, 57 residues long: Large ribosomal subunit protein bL32 (57 aa).

The segment covering 1-19 has biased composition (basic residues); the sequence is MAVPKRRMSRSNTRSRRSQ. A disordered region spans residues 1–21; the sequence is MAVPKRRMSRSNTRSRRSQWK.

It belongs to the bacterial ribosomal protein bL32 family.

In Mycobacteroides abscessus (strain ATCC 19977 / DSM 44196 / CCUG 20993 / CIP 104536 / JCM 13569 / NCTC 13031 / TMC 1543 / L948) (Mycobacterium abscessus), this protein is Large ribosomal subunit protein bL32.